The sequence spans 339 residues: D-erythrose-4-phosphate dehydrogenase (339 aa).

NAD(+) is bound by residues 12–13 (RI) and R81. Substrate-binding positions include 154–156 (SCT), R200, 213–214 (TR), and R236. The Nucleophile role is filled by C155. Residue N318 coordinates NAD(+).

The protein belongs to the glyceraldehyde-3-phosphate dehydrogenase family. Epd subfamily. Homotetramer.

The protein resides in the cytoplasm. It catalyses the reaction D-erythrose 4-phosphate + NAD(+) + H2O = 4-phospho-D-erythronate + NADH + 2 H(+). Its pathway is cofactor biosynthesis; pyridoxine 5'-phosphate biosynthesis; pyridoxine 5'-phosphate from D-erythrose 4-phosphate: step 1/5. In terms of biological role, catalyzes the NAD-dependent conversion of D-erythrose 4-phosphate to 4-phosphoerythronate. This chain is D-erythrose-4-phosphate dehydrogenase, found in Cronobacter sakazakii (strain ATCC BAA-894) (Enterobacter sakazakii).